Reading from the N-terminus, the 288-residue chain is Fibroblast growth factor 2 (288 aa).

Positions 1–142 are excised as a propeptide; it reads MVGVGGGDVE…TMAAGSITTL (142 aa). Residues 1–156 form a disordered region; sequence MVGVGGGDVE…EDGGSGAFPP (156 aa). A compositionally biased stretch (basic and acidic residues) spans 72-84; that stretch reads ERPSGSRLGDHGR. Arginine 108, arginine 110, and arginine 112 each carry omega-N-methylarginine; alternate. Symmetric dimethylarginine; alternate is present on residues arginine 108, arginine 110, and arginine 112. Positions 113–132 are enriched in low complexity; that stretch reads GTAAPRAAPAARGSRPGPAG. Heparin is bound at residue asparagine 169. Positions 179 to 181 match the Cell attachment site; atypical motif; that stretch reads DGR. Phosphotyrosine; by TEC is present on tyrosine 215. The Cell attachment site; atypical motif lies at 221-223; it reads DGR. A Glycyl lysine isopeptide (Lys-Gly) (interchain with G-Cter in SUMO1) cross-link involves residue lysine 228. Residues 261 to 277 are heparin-binding; it reads KRTGQYKLGSKTGPGQK.

Belongs to the heparin-binding growth factors family. Monomer. Homodimer. Interacts with FGFR1, FGFR2, FGFR3 and FGFR4. Affinity between fibroblast growth factors (FGFs) and their receptors is increased by heparan sulfate glycosaminoglycans that function as coreceptors. Interacts with CSPG4, FGFBP1 and TEC. Found in a complex with FGFBP1, FGF1 and FGF2. Interacts with FGFBP3. Interacts with integrin ITGAV:ITGB3; the interaction is required for FGF2 signaling. Interacts with SNORC (via the extracellular domain). Interacts with glypican GPC3. In terms of processing, phosphorylation at Tyr-215 regulates FGF2 unconventional secretion.

Its subcellular location is the secreted. The protein localises to the nucleus. Its function is as follows. Acts as a ligand for FGFR1, FGFR2, FGFR3 and FGFR4. Also acts as an integrin ligand which is required for FGF2 signaling. Binds to integrin ITGAV:ITGB3. Plays an important role in the regulation of cell survival, cell division, cell differentiation and cell migration. Functions as a potent mitogen in vitro. Can induce angiogenesis. Mediates phosphorylation of ERK1/2 and thereby promotes retinal lens fiber differentiation. This is Fibroblast growth factor 2 from Pan troglodytes (Chimpanzee).